Here is a 233-residue protein sequence, read N- to C-terminus: Sugar fermentation stimulation protein homolog (233 aa).

This sequence belongs to the SfsA family.

This chain is Sugar fermentation stimulation protein homolog, found in Saccharophagus degradans (strain 2-40 / ATCC 43961 / DSM 17024).